Here is a 1373-residue protein sequence, read N- to C-terminus: DNA-directed RNA polymerase subunit beta (1373 aa).

The protein belongs to the RNA polymerase beta chain family. In terms of assembly, the RNAP catalytic core consists of 2 alpha, 1 beta, 1 beta' and 1 omega subunit. When a sigma factor is associated with the core the holoenzyme is formed, which can initiate transcription.

The catalysed reaction is RNA(n) + a ribonucleoside 5'-triphosphate = RNA(n+1) + diphosphate. Functionally, DNA-dependent RNA polymerase catalyzes the transcription of DNA into RNA using the four ribonucleoside triphosphates as substrates. The sequence is that of DNA-directed RNA polymerase subunit beta from Rickettsia massiliae (strain Mtu5).